A 1003-amino-acid chain; its full sequence is Translation initiation factor IF-2 (1003 aa).

5 stretches are compositionally biased toward basic and acidic residues: residues 61-74 (EKFS…DRNK), 139-169 (PVVE…KKPE), 180-206 (LEEK…KETP), 219-229 (VFKIRPTEFKS), and 252-290 (SKEE…DKIS). 2 disordered regions span residues 61–81 (EKFS…SIEG) and 135–362 (PKAE…KDRF). The segment covering 315-350 (NAAGTTNAGGASNNNQRNDNANRPNRNNNSKPNGNN) has biased composition (low complexity). A tr-type G domain is found at 502–672 (PRAPIVTVMG…LLEAEMLDLK (171 aa)). The G1 stretch occupies residues 511 to 518 (GHVDHGKT). 511–518 (GHVDHGKT) is a GTP binding site. A G2 region spans residues 536–540 (GITQH). The segment at 558 to 561 (DTPG) is G3. Residues 558–562 (DTPGH) and 612–615 (NKVD) contribute to the GTP site. Residues 612–615 (NKVD) are G4. The tract at residues 648 to 650 (SAK) is G5.

This sequence belongs to the TRAFAC class translation factor GTPase superfamily. Classic translation factor GTPase family. IF-2 subfamily.

It localises to the cytoplasm. In terms of biological role, one of the essential components for the initiation of protein synthesis. Protects formylmethionyl-tRNA from spontaneous hydrolysis and promotes its binding to the 30S ribosomal subunits. Also involved in the hydrolysis of GTP during the formation of the 70S ribosomal complex. This chain is Translation initiation factor IF-2, found in Phocaeicola vulgatus (strain ATCC 8482 / DSM 1447 / JCM 5826 / CCUG 4940 / NBRC 14291 / NCTC 11154) (Bacteroides vulgatus).